The chain runs to 105 residues: Large ribosomal subunit protein uL23 (105 aa).

It belongs to the universal ribosomal protein uL23 family. As to quaternary structure, part of the 50S ribosomal subunit. Contacts protein L29, and trigger factor when it is bound to the ribosome.

One of the early assembly proteins it binds 23S rRNA. One of the proteins that surrounds the polypeptide exit tunnel on the outside of the ribosome. Forms the main docking site for trigger factor binding to the ribosome. This chain is Large ribosomal subunit protein uL23, found in Herminiimonas arsenicoxydans.